Consider the following 157-residue polypeptide: Protein-export protein SecB (157 aa).

Belongs to the SecB family. In terms of assembly, homotetramer, a dimer of dimers. One homotetramer interacts with 1 SecA dimer.

It localises to the cytoplasm. One of the proteins required for the normal export of preproteins out of the cell cytoplasm. It is a molecular chaperone that binds to a subset of precursor proteins, maintaining them in a translocation-competent state. It also specifically binds to its receptor SecA. The polypeptide is Protein-export protein SecB (Shewanella oneidensis (strain ATCC 700550 / JCM 31522 / CIP 106686 / LMG 19005 / NCIMB 14063 / MR-1)).